Reading from the N-terminus, the 238-residue chain is Cysteine-rich venom protein 2 (238 aa).

The first 19 residues, 1–19, serve as a signal peptide directing secretion; sequence MIAFIVLLSLAAVLQQSSG. The 127-residue stretch at 38–164 folds into the SCP domain; that stretch reads VDKHNALRRS…STKYLYVCQY (127 aa). 8 disulfide bridges follow: Cys-75/Cys-153, Cys-92/Cys-165, Cys-148/Cys-162, Cys-184/Cys-191, Cys-187/Cys-196, Cys-200/Cys-233, Cys-209/Cys-227, and Cys-218/Cys-231. The ShKT domain maps to 200–233; the sequence is CEYEDAYTNCNDLVKERKCQTEWIKSQCPATCFC.

It belongs to the CRISP family. In terms of tissue distribution, expressed by the venom gland.

The protein localises to the secreted. Blocks contraction of smooth muscle elicited by high potassium-induced depolarization, but does not block caffeine-stimulated contraction. May target voltage-gated calcium channels (Cav) on smooth muscle. In Hydrophis hardwickii (Hardwick's spine-bellied seasnake), this protein is Cysteine-rich venom protein 2.